The following is a 132-amino-acid chain: uncharacterized protein (132 aa).

A signal peptide spans 1 to 35; it reads MSFEYRHYKREAKICTCRGGWAHVLLCIGVSQGAC. The segment at 91 to 132 is disordered; that stretch reads AHPGSHSDQPPGVPSRRKSRLERWSPSVSRSTSPPTEAPFCL. Over residues 115 to 125 the composition is skewed to low complexity; the sequence is SPSVSRSTSPP.

It localises to the secreted. This is an uncharacterized protein from Homo sapiens (Human).